Reading from the N-terminus, the 192-residue chain is Anthrone oxygenase (192 aa).

The next 3 helical transmembrane spans lie at Ile12–Val32, Gly54–Ala74, and Ala86–Ser106. N-linked (GlcNAc...) asparagine glycosylation is found at Asn130, Asn138, and Asn147. A helical membrane pass occupies residues Met172 to Val192.

It belongs to the anthrone oxygenase family.

The protein localises to the membrane. It catalyses the reaction emodin anthrone + O2 = emodin + H2O + H(+). It functions in the pathway secondary metabolite biosynthesis. In terms of biological role, anthrone oxygenase; part of the gene cluster that mediates the biosynthesis of monodictyphenone, a prenyl xanthone derivative. The pathway begins with the synthesis of atrochrysone thioester by the polyketide synthase (PKS) mdpG. The atrochrysone carboxyl ACP thioesterase mdpF then breaks the thioester bond and releases the atrochrysone carboxylic acid from mdpG. The atrochrysone carboxylic acid is then converted to atrochrysone which is further transformed into emodin anthrone by mdpH-1 and mdpH-2. Emodin is further modified to yield monodictyphenone via several steps involving mdpB, mdpC mdpJ, mdpK and mdpL. These enzymes with xptA, xptB and xptC are also proposed to be involved in the synthesis of shamixanthone from emodin. Especially, direct reduction of emodin by the short chain dehydrogenase mdpC followed by dehydration catalyzed by the scytalone dehydratase-like protein mdpB gives loss of oxygen and formation of chrysophanol intermediate in two simple steps. The chain is Anthrone oxygenase from Emericella nidulans (strain FGSC A4 / ATCC 38163 / CBS 112.46 / NRRL 194 / M139) (Aspergillus nidulans).